Here is a 207-residue protein sequence, read N- to C-terminus: LPS-assembly lipoprotein LptE (207 aa).

A signal peptide spans 1–19 (MRHRILMLLLGLAVLVTAG). Cysteine 20 carries the N-palmitoyl cysteine lipid modification. Cysteine 20 is lipidated: S-diacylglycerol cysteine.

The protein belongs to the LptE lipoprotein family. Component of the lipopolysaccharide transport and assembly complex. Interacts with LptD.

Its subcellular location is the cell outer membrane. In terms of biological role, together with LptD, is involved in the assembly of lipopolysaccharide (LPS) at the surface of the outer membrane. Required for the proper assembly of LptD. Binds LPS and may serve as the LPS recognition site at the outer membrane. In Yersinia enterocolitica serotype O:8 / biotype 1B (strain NCTC 13174 / 8081), this protein is LPS-assembly lipoprotein LptE.